Reading from the N-terminus, the 122-residue chain is Large ribosomal subunit protein uL14 (122 aa).

Belongs to the universal ribosomal protein uL14 family. As to quaternary structure, part of the 50S ribosomal subunit. Forms a cluster with proteins L3 and L19. In the 70S ribosome, L14 and L19 interact and together make contacts with the 16S rRNA in bridges B5 and B8.

Functionally, binds to 23S rRNA. Forms part of two intersubunit bridges in the 70S ribosome. This chain is Large ribosomal subunit protein uL14, found in Mycoplasmopsis agalactiae (strain NCTC 10123 / CIP 59.7 / PG2) (Mycoplasma agalactiae).